Here is a 106-residue protein sequence, read N- to C-terminus: Protein yippee-like At4g27745 (106 aa).

The Yippee domain occupies 8 to 105; the sequence is RLYSCCNCRN…FEKAKIVKED (98 aa). 4 residues coordinate Zn(2+): cysteine 12, cysteine 15, cysteine 68, and cysteine 71.

It belongs to the yippee family.

This is Protein yippee-like At4g27745 from Arabidopsis thaliana (Mouse-ear cress).